A 216-amino-acid chain; its full sequence is Putative flagellar filament outer layer-like protein (216 aa).

Residues 1-22 are disordered; it reads MFAQDAAQTGEQTTQNQGENGN. The span at 8 to 22 shows a compositional bias: low complexity; it reads QTGEQTTQNQGENGN.

The protein localises to the periplasmic flagellum. Its subcellular location is the periplasm. Functionally, might be part of the flagella. This is Putative flagellar filament outer layer-like protein (flaAL) from Brachyspira hyodysenteriae (strain ATCC 49526 / WA1).